The chain runs to 92 residues: Elongation factor 1-beta (92 aa).

This sequence belongs to the EF-1-beta/EF-1-delta family.

Functionally, promotes the exchange of GDP for GTP in EF-1-alpha/GDP, thus allowing the regeneration of EF-1-alpha/GTP that could then be used to form the ternary complex EF-1-alpha/GTP/AAtRNA. The protein is Elongation factor 1-beta of Pyrobaculum arsenaticum (strain DSM 13514 / JCM 11321 / PZ6).